Here is an 840-residue protein sequence, read N- to C-terminus: Phosphatidylglycerol lysyltransferase (840 aa).

Residues 1–8 (MNQEVKNK) lie on the Cytoplasmic side of the membrane. Residues 9–29 (IFSILKITFATALFIFVVITL) traverse the membrane as a helical segment. Topologically, residues 30-52 (YRELSGINFKDTLVEFSKINRMS) are extracellular. A helical transmembrane segment spans residues 53 to 73 (LVLLFIGGGASLVILSMYDVI). At 74–89 (LSRALKMDISLGKVLR) the chain is on the cytoplasmic side. A helical membrane pass occupies residues 90–110 (VSYIINALNAIVGFGGFIGAG). Residues 111 to 128 (VRAMVYKNYTHDKKKLVH) are Extracellular-facing. The chain crosses the membrane as a helical span at residues 129–149 (FISLILISMLTGLSLLSLLIV). Residues 150–161 (FHVFDASLILNK) are Cytoplasmic-facing. Residues 162 to 182 (ITWVRWVLYAVSLFLPLFIIY) traverse the membrane as a helical segment. Residues 183-200 (SMVRPPDKNNRYVGLYCT) lie on the Extracellular side of the membrane. Residues 201–221 (LVSCVEWLAAAVVLYFCGVIV) traverse the membrane as a helical segment. At 222–229 (DVHVSFMS) the chain is on the cytoplasmic side. Residues 230-250 (FIAIFIIAALSGLVSFIPGGF) form a helical membrane-spanning segment. The Extracellular portion of the chain corresponds to 251 to 271 (GAFDLVVLLGFKTLGVPEEKV). The chain crosses the membrane as a helical span at residues 272-292 (LLMLLLYRFAYYFVPVIIALI). At 293 to 337 (LSSFEFGTSAKKYIEGSKYFIPAKDVTSFLMSYQKDIIAKIPSLS) the chain is on the cytoplasmic side. Residues 338 to 358 (LAILVFFTSMIFFVNNLTIVY) traverse the membrane as a helical segment. At 359–369 (DALYDGNHLTY) the chain is on the extracellular side. Residues 370 to 390 (YLLLAIHTSACLLLLLNVVGI) traverse the membrane as a helical segment. Over 391-394 (YKQS) the chain is Cytoplasmic. The next 2 membrane-spanning stretches (helical) occupy residues 395–415 (RRAI…TLFT) and 416–436 (YASY…IVAF). Topologically, residues 437–450 (RRARRLKRPIRMRN) are cytoplasmic. The helical transmembrane segment at 451-471 (LVAMLLFSIFILYINHIFIAG) threads the bilayer. Topologically, residues 472-489 (TFYALDVYTIEMHTSVLK) are extracellular. Residues 490-510 (YYFWITILIIAIIVGAIAWLF) traverse the membrane as a helical segment. At 511–840 (DYQFSKVRIS…SKVMRVIRHK (330 aa)) the chain is on the cytoplasmic side.

This sequence belongs to the LPG synthase family.

It is found in the cell membrane. It carries out the reaction L-lysyl-tRNA(Lys) + a 1,2-diacyl-sn-glycero-3-phospho-(1'-sn-glycerol) = a 1,2-diacyl-sn-glycero-3-phospho-1'-(3'-O-L-lysyl)-sn-glycerol + tRNA(Lys). In terms of biological role, catalyzes the transfer of a lysyl group from L-lysyl-tRNA(Lys) to membrane-bound phosphatidylglycerol (PG), which produces lysylphosphatidylglycerol (LPG), a major component of the bacterial membrane with a positive net charge. LPG synthesis contributes to bacterial virulence as it is involved in the resistance mechanism against cationic antimicrobial peptides (CAMP) produces by the host's immune system (defensins, cathelicidins) and by the competing microorganisms (bacteriocins). In fact, the modification of anionic phosphatidylglycerol with positively charged L-lysine results in repulsion of the peptides. This is Phosphatidylglycerol lysyltransferase (mprF) from Staphylococcus aureus (strain MRSA252).